We begin with the raw amino-acid sequence, 737 residues long: Protein OPG064 (737 aa).

N-acetylmethionine; by host is present on M1. Residues C496 and C535 are joined by a disulfide bond.

The protein belongs to the orthopoxvirus OPG064 family. As to quaternary structure, interacts with host KLC2; this interaction promotes IEV trafficking by engaging the host kinesin-1 complex. Interacts with protein OPG056. Post-translationally, N-acetylated on initiator methionine by host.

Functionally, plays a role in intracellular enveloped virus (IEV) transport to the cell surface on microtubules. Together with protein OPG056, forms a complex that interacts with host KLC2 (kinesin light chain isoform 2) to engage the kinesin-1 complex and thereby promote IEV trafficking. This is Protein OPG064 (OPG064) from Monkeypox virus.